We begin with the raw amino-acid sequence, 82 residues long: UPF0180 protein BAA_1480 (82 aa).

It belongs to the UPF0180 family.

The protein is UPF0180 protein BAA_1480 of Bacillus anthracis (strain A0248).